The sequence spans 235 residues: Carboxy-S-adenosyl-L-methionine synthase (235 aa).

Residues Tyr-35, 60-62, 83-84, Asn-124, and Arg-191 each bind S-adenosyl-L-methionine; these read GCS and DN.

This sequence belongs to the class I-like SAM-binding methyltransferase superfamily. Cx-SAM synthase family. In terms of assembly, homodimer.

It catalyses the reaction prephenate + S-adenosyl-L-methionine = carboxy-S-adenosyl-L-methionine + 3-phenylpyruvate + H2O. Its function is as follows. Catalyzes the conversion of S-adenosyl-L-methionine (SAM) to carboxy-S-adenosyl-L-methionine (Cx-SAM). This Campylobacter jejuni subsp. jejuni serotype O:6 (strain 81116 / NCTC 11828) protein is Carboxy-S-adenosyl-L-methionine synthase.